The following is an 862-amino-acid chain: Eukaryotic translation initiation factor 3 subunit C (862 aa).

The interval 1 to 81 (MSSRFFYGGG…EEEEKVTVVK (81 aa)) is disordered. Residues 17–54 (SSDEEELYSDREEEEKSEEEESSEEEDETSEEEESDEE) are compositionally biased toward acidic residues. The segment covering 55-65 (TGAKKFLKDVA) has biased composition (basic and acidic residues). The segment covering 66–75 (SDSEEEEEEE) has biased composition (acidic residues). In terms of domain architecture, PCI spans 600 to 774 (FHMHINLELL…NAIVFRKGVE (175 aa)). Residues 813–862 (RDQGAGARGGRGSGRGGQARGGPRFPGGQQGRRPGGQQFGGGALGGAIKA) form a disordered region. Over residues 818–862 (GARGGRGSGRGGQARGGPRFPGGQQGRRPGGQQFGGGALGGAIKA) the composition is skewed to gly residues.

This sequence belongs to the eIF-3 subunit C family. As to quaternary structure, component of the eukaryotic translation initiation factor 3 (eIF-3) complex.

Its subcellular location is the cytoplasm. Functionally, component of the eukaryotic translation initiation factor 3 (eIF-3) complex, which is involved in protein synthesis of a specialized repertoire of mRNAs and, together with other initiation factors, stimulates binding of mRNA and methionyl-tRNAi to the 40S ribosome. The eIF-3 complex specifically targets and initiates translation of a subset of mRNAs involved in cell proliferation. The sequence is that of Eukaryotic translation initiation factor 3 subunit C (nip1) from Neosartorya fischeri (strain ATCC 1020 / DSM 3700 / CBS 544.65 / FGSC A1164 / JCM 1740 / NRRL 181 / WB 181) (Aspergillus fischerianus).